A 1364-amino-acid chain; its full sequence is Kinectin (1364 aa).

Over 1–6 (MEFYES) the chain is Cytoplasmic. A helical; Signal-anchor for type II membrane protein transmembrane segment spans residues 7 to 29 (TYFIILIPSVVITVIFLFFWLFM). Residues 30-1364 (KETLYDEVLA…KGREHYQLVE (1335 aa)) are Lumenal-facing. 4 stretches are compositionally biased toward basic and acidic residues: residues 46–56 (KFPPTKSDKKK), 73–86 (HESDSESTPRDFKL), 121–135 (QKAAQDDHVTKESEG), and 170–179 (QKNDDQDTKT). Positions 46–207 (KFPPTKSDKK…VKQENVSGKK (162 aa)) are disordered. N-linked (GlcNAc...) asparagine glycosylation is found at Asn-202, Asn-267, Asn-623, Asn-638, Asn-704, Asn-775, Asn-976, Asn-1061, Asn-1088, and Asn-1094. Positions 315 to 1085 (KASKAESAAA…VETRELLQKL (771 aa)) form a coiled coil. The stretch at 1116 to 1306 (SGSEDIKVME…ASLEREIGKV (191 aa)) forms a coiled coil.

This sequence belongs to the kinectin family. Parallel homodimers formed between the membrane-bound and the cytosolic form, and also between 2 cytosolic forms. Both the membrane and cytoplasmic forms seem to be myristoylated.

It localises to the endoplasmic reticulum membrane. Its function is as follows. Receptor for kinesin thus involved in kinesin-driven vesicle motility. In Gallus gallus (Chicken), this protein is Kinectin (KTN1).